The following is a 491-amino-acid chain: Glycogen synthase 1 (491 aa).

Position 15 (Lys15) interacts with ADP-alpha-D-glucose.

The protein belongs to the glycosyltransferase 1 family. Bacterial/plant glycogen synthase subfamily.

The enzyme catalyses [(1-&gt;4)-alpha-D-glucosyl](n) + ADP-alpha-D-glucose = [(1-&gt;4)-alpha-D-glucosyl](n+1) + ADP + H(+). It participates in glycan biosynthesis; glycogen biosynthesis. Synthesizes alpha-1,4-glucan chains using ADP-glucose. The chain is Glycogen synthase 1 from Synechococcus sp. (strain JA-3-3Ab) (Cyanobacteria bacterium Yellowstone A-Prime).